Consider the following 544-residue polypeptide: Chaperonin GroEL (544 aa).

ATP contacts are provided by residues 30–33, lysine 51, 87–91, glycine 415, 479–481, and aspartate 495; these read TLGP, DGTTT, and NAA.

Belongs to the chaperonin (HSP60) family. In terms of assembly, forms a cylinder of 14 subunits composed of two heptameric rings stacked back-to-back. Interacts with the co-chaperonin GroES.

It localises to the cytoplasm. The enzyme catalyses ATP + H2O + a folded polypeptide = ADP + phosphate + an unfolded polypeptide.. Together with its co-chaperonin GroES, plays an essential role in assisting protein folding. The GroEL-GroES system forms a nano-cage that allows encapsulation of the non-native substrate proteins and provides a physical environment optimized to promote and accelerate protein folding. This Francisella tularensis subsp. holarctica (strain FTNF002-00 / FTA) protein is Chaperonin GroEL.